The primary structure comprises 370 residues: A-type ATP synthase subunit C (370 aa).

This sequence belongs to the V-ATPase V0D/AC39 subunit family. In terms of assembly, has multiple subunits with at least A(3), B(3), C, D, E, F, H, I and proteolipid K(x).

It localises to the cell membrane. Its function is as follows. Component of the A-type ATP synthase that produces ATP from ADP in the presence of a proton gradient across the membrane. The polypeptide is A-type ATP synthase subunit C (Pyrococcus horikoshii (strain ATCC 700860 / DSM 12428 / JCM 9974 / NBRC 100139 / OT-3)).